Here is a 194-residue protein sequence, read N- to C-terminus: Extracellular globin-E1 (194 aa).

Globin domains are found at residues 1–45 and 55–194; these read DISH…MGLS and GLSG…LRQA. Histidine 150 contacts heme b.

Belongs to the globin family. Artemia hemoglobin is a dimer of two similar sized subunits. Each subunit represents a globin chain which exists in two forms (alpha and beta), thus making possible three different phenotypes (HB1, alpha(2), HB2, alpha/beta, HB3, beta(2)). The globin chain is a polymer of eight heme-binding covalently linked domains.

This is Extracellular globin-E1 from Artemia sp. (Brine shrimp).